The chain runs to 251 residues: Flap endonuclease Xni (251 aa).

The tract at residues Glu-51 to Pro-72 is disordered. Asp-104 contributes to the Mg(2+) binding site. In terms of domain architecture, 5'-3' exonuclease spans Val-160–Leu-249. 5 residues coordinate K(+): Leu-171, Ala-172, Pro-180, Val-182, and Ile-185. Residues Gly-184–Thr-189 are interaction with DNA.

Belongs to the Xni family. Requires Mg(2+) as cofactor. K(+) serves as cofactor.

Its function is as follows. Has flap endonuclease activity. During DNA replication, flap endonucleases cleave the 5'-overhanging flap structure that is generated by displacement synthesis when DNA polymerase encounters the 5'-end of a downstream Okazaki fragment. This chain is Flap endonuclease Xni, found in Yersinia enterocolitica serotype O:8 / biotype 1B (strain NCTC 13174 / 8081).